A 432-amino-acid polypeptide reads, in one-letter code: Phosphomevalonate kinase (432 aa).

ATP is bound by residues lysine 10 and 142–148 (VEKTGLG).

This sequence belongs to the GHMP kinase family. Mevalonate kinase subfamily.

It localises to the cytoplasm. It catalyses the reaction (R)-5-phosphomevalonate + ATP = (R)-5-diphosphomevalonate + ADP. It functions in the pathway isoprenoid biosynthesis; isopentenyl diphosphate biosynthesis via mevalonate pathway; isopentenyl diphosphate from (R)-mevalonate: step 2/3. Phosphomevalonate kinase; part of the second module of ergosterol biosynthesis pathway that includes the middle steps of the pathway. ERG8 converts 5-phosphomevalonate to 5-diphosphomevalonate. The second module is carried out in the vacuole and involves the formation of farnesyl diphosphate, which is also an important intermediate in the biosynthesis of ubiquinone, dolichol, heme and prenylated proteins. Activity by the mevalonate kinase ERG12 first converts mevalonate into 5-phosphomevalonate. 5-phosphomevalonate is then further converted to 5-diphosphomevalonate by the phosphomevalonate kinase ERG8. The diphosphomevalonate decarboxylase MVD then produces isopentenyl diphosphate. The isopentenyl-diphosphate delta-isomerase IDI1 then catalyzes the 1,3-allylic rearrangement of the homoallylic substrate isopentenyl (IPP) to its highly electrophilic allylic isomer, dimethylallyl diphosphate (DMAPP). Finally the farnesyl diphosphate synthase ERG20 catalyzes the sequential condensation of isopentenyl pyrophosphate with dimethylallyl pyrophosphate, and then with the resultant geranylpyrophosphate to the ultimate product farnesyl pyrophosphate. The chain is Phosphomevalonate kinase from Candida albicans (strain SC5314 / ATCC MYA-2876) (Yeast).